A 433-amino-acid chain; its full sequence is Type I acyl-CoA thioesterase mpaH' (433 aa).

The interval 58-246 (HGVGLPKELY…IKALFGTTAD (189 aa)) is abhydrolase domain. Valine 60 contributes to the substrate binding site. Serine 139 (nucleophile) is an active-site residue. Phenylalanine 140 provides a ligand contact to substrate. Residues aspartate 163 and histidine 365 contribute to the active site.

Belongs to the AB hydrolase superfamily. MpaH hydrolase family. Homodimer.

It localises to the peroxisome matrix. It catalyses the reaction mycophenolyl-CoA + H2O = mycophenolate + CoA + H(+). It participates in secondary metabolite biosynthesis; terpenoid biosynthesis. In terms of biological role, type I acyl-CoA thioesterase; part of the gene cluster that mediates the biosynthesis of mycophenolic acid (MPA), the first isolated antibiotic natural product in the world obtained from a culture of Penicillium brevicompactum in 1893. MpaH' acts as a peroxisomal acyl-CoA hydrolase that converts MPA-CoA into the final product MPA. The first step of the pathway is the synthesis of 5-methylorsellinic acid (5MOA) by the cytosolic polyketide synthase mpaC. 5MOA is then converted to the phthalide compound 5,7-dihydroxy-4,6-dimethylphthalide (DHMP) by the endoplasmic reticulum-bound cytochrome P450 monooxygenase mpaDE. MpaDE first catalyzes hydroxylation of 5-MOA to 4,6-dihydroxy-2-(hydroxymethyl)-3-methylbenzoic acid (DHMB). MpaDE then acts as a lactone synthase that catalyzes the ring closure to convert DHMB into DHMP. The next step is the prenylation of DHMP by the Golgi apparatus-associated prenyltransferase mpaA to yield farnesyl-DHMP (FDHMP). The ER-bound oxygenase mpaB then mediates the oxidative cleavage the C19-C20 double bond in FDHMP to yield FDHMP-3C via a mycophenolic aldehyde intermediate. The O-methyltransferase mpaG catalyzes the methylation of FDHMP-3C to yield MFDHMP-3C. After the cytosolic methylation of FDHMP-3C, MFDHMP-3C enters into peroxisomes probably via free diffusion due to its low molecular weight. Upon a peroxisomal CoA ligation reaction, catalyzed by a beta-oxidation component enzyme acyl-CoA ligase ACL891, MFDHMP-3C-CoA would then be restricted to peroxisomes for the following beta-oxidation pathway steps. The peroxisomal beta-oxidation machinery than converts MFDHMP-3C-CoA into MPA_CoA, via a beta-oxidation chain-shortening process. Finally mpaH acts as a peroxisomal acyl-CoA hydrolase with high substrate specificity toward MPA-CoA to release the final product MPA. The polypeptide is Type I acyl-CoA thioesterase mpaH' (Penicillium brevicompactum).